Here is a 557-residue protein sequence, read N- to C-terminus: Glutamyl-tRNA(Gln) amidotransferase subunit B, mitochondrial (557 aa).

The transit peptide at 1–41 (MAAPMLRWGCRGRRWAFARVDGGSCHRRGAPTGSTSNQIRG) directs the protein to the mitochondrion. The disordered stretch occupies residues 26–45 (HRRGAPTGSTSNQIRGESSV). Positions 32–45 (TGSTSNQIRGESSV) are enriched in polar residues. Lysine 529 carries the N6-succinyllysine modification.

It belongs to the GatB/GatE family. GatB subfamily. Subunit of the heterotrimeric GatCAB amidotransferase (AdT) complex, composed of A (QRSL1), B (GATB) and C (GATC) subunits. As to expression, predominantly expressed in tissues characterized by high rates of oxidative phosphorylation (OxPhos), including muscle and heart.

The protein localises to the mitochondrion. It catalyses the reaction L-glutamyl-tRNA(Gln) + L-glutamine + ATP + H2O = L-glutaminyl-tRNA(Gln) + L-glutamate + ADP + phosphate + H(+). Its function is as follows. Allows the formation of correctly charged Gln-tRNA(Gln) through the transamidation of misacylated Glu-tRNA(Gln) in the mitochondria. The reaction takes place in the presence of glutamine and ATP through an activated gamma-phospho-Glu-tRNA(Gln). In Homo sapiens (Human), this protein is Glutamyl-tRNA(Gln) amidotransferase subunit B, mitochondrial.